The following is a 389-amino-acid chain: D-alanine--D-alanine ligase (389 aa).

Polar residues predominate over residues 1–12 (MSTENLPQNPEQ). The disordered stretch occupies residues 1 to 22 (MSTENLPQNPEQSPRRPPRKPR). The ATP-grasp domain occupies 169–379 (KAVFTSYGLK…YPELVDRLVQ (211 aa)). An ATP-binding site is contributed by 205-260 (AGEHGWPLFVKPARAGSSIGITKVDDLAGLDEAIEEARRHDPKILVEAALRGREIE). Mg(2+)-binding residues include D333, E346, and N348.

The protein belongs to the D-alanine--D-alanine ligase family. The cofactor is Mg(2+). It depends on Mn(2+) as a cofactor.

Its subcellular location is the cytoplasm. The enzyme catalyses 2 D-alanine + ATP = D-alanyl-D-alanine + ADP + phosphate + H(+). The protein operates within cell wall biogenesis; peptidoglycan biosynthesis. In terms of biological role, cell wall formation. This is D-alanine--D-alanine ligase (ddl) from Streptomyces coelicolor (strain ATCC BAA-471 / A3(2) / M145).